We begin with the raw amino-acid sequence, 108 residues long: Urease subunit beta (108 aa).

The protein belongs to the urease beta subunit family. Heterotrimer of UreA (gamma), UreB (beta) and UreC (alpha) subunits. Three heterotrimers associate to form the active enzyme.

The protein localises to the cytoplasm. It catalyses the reaction urea + 2 H2O + H(+) = hydrogencarbonate + 2 NH4(+). Its pathway is nitrogen metabolism; urea degradation; CO(2) and NH(3) from urea (urease route): step 1/1. The chain is Urease subunit beta from Trichormus variabilis (strain ATCC 29413 / PCC 7937) (Anabaena variabilis).